The sequence spans 498 residues: ATP synthase subunit alpha, chloroplastic (498 aa).

170–177 (GDRQTGKT) contributes to the ATP binding site.

The protein belongs to the ATPase alpha/beta chains family. As to quaternary structure, F-type ATPases have 2 components, CF(1) - the catalytic core - and CF(0) - the membrane proton channel. CF(1) has five subunits: alpha(3), beta(3), gamma(1), delta(1), epsilon(1). CF(0) has four main subunits: a, b, b' and c.

It is found in the plastid. Its subcellular location is the chloroplast thylakoid membrane. The enzyme catalyses ATP + H2O + 4 H(+)(in) = ADP + phosphate + 5 H(+)(out). Its function is as follows. Produces ATP from ADP in the presence of a proton gradient across the membrane. The alpha chain is a regulatory subunit. The sequence is that of ATP synthase subunit alpha, chloroplastic from Oltmannsiellopsis viridis (Marine flagellate).